The following is a 246-amino-acid chain: Uridylate kinase (246 aa).

Position 20-23 (20-23 (KISG)) interacts with ATP. The involved in allosteric activation by GTP stretch occupies residues 28–33 (GDQGYG). Position 62 (Gly-62) interacts with UMP. Residues Gly-63 and Arg-67 each coordinate ATP. Residues Asp-82 and 143–150 (TGNPYFTT) contribute to the UMP site. The ATP site is built by Thr-170, Tyr-176, and Asp-179.

It belongs to the UMP kinase family. Homohexamer.

The protein resides in the cytoplasm. The catalysed reaction is UMP + ATP = UDP + ADP. The protein operates within pyrimidine metabolism; CTP biosynthesis via de novo pathway; UDP from UMP (UMPK route): step 1/1. Allosterically activated by GTP. Inhibited by UTP. In terms of biological role, catalyzes the reversible phosphorylation of UMP to UDP. The chain is Uridylate kinase from Cereibacter sphaeroides (strain ATCC 17025 / ATH 2.4.3) (Rhodobacter sphaeroides).